The sequence spans 800 residues: Protein PET111, mitochondrial (800 aa).

This sequence to yeast YHR160C.

Its subcellular location is the mitochondrion matrix. In terms of biological role, required for translation of the mitochondrial gene for cytochrome c oxidase subunit II (COX2). This is Protein PET111, mitochondrial (PET111) from Saccharomyces cerevisiae (strain ATCC 204508 / S288c) (Baker's yeast).